The primary structure comprises 135 residues: MVQLTTVLCKAYRGGHLTIRLALGGCTNRPFYRIVAAHNKCPRDGRFVEQLGSYDPMPNSHGEKLVALNLDRIRHWIGCGAHLSKPVEKLLGLSGFFPLHPMVITNAERLRRKRAQEVLLAAQKTDTEATETKEN.

The N-terminal 34 residues, 1–34 (MVQLTTVLCKAYRGGHLTIRLALGGCTNRPFYRI), are a transit peptide targeting the mitochondrion. The residue at position 130 (Thr130) is a Phosphothreonine.

Belongs to the bacterial ribosomal protein bS16 family. As to quaternary structure, component of the mitochondrial ribosome small subunit (28S) which comprises a 12S rRNA and about 30 distinct proteins.

It localises to the mitochondrion. In Bos taurus (Bovine), this protein is Small ribosomal subunit protein bS16m (MRPS16).